The sequence spans 540 residues: Chaperonin GroEL (540 aa).

Residues threonine 29–proline 32, aspartate 86–threonine 90, glycine 413, asparagine 476–alanine 478, and aspartate 492 contribute to the ATP site.

This sequence belongs to the chaperonin (HSP60) family. Forms a cylinder of 14 subunits composed of two heptameric rings stacked back-to-back. Interacts with the co-chaperonin GroES.

Its subcellular location is the cytoplasm. The enzyme catalyses ATP + H2O + a folded polypeptide = ADP + phosphate + an unfolded polypeptide.. Functionally, together with its co-chaperonin GroES, plays an essential role in assisting protein folding. The GroEL-GroES system forms a nano-cage that allows encapsulation of the non-native substrate proteins and provides a physical environment optimized to promote and accelerate protein folding. The chain is Chaperonin GroEL from Streptococcus pneumoniae (strain P1031).